The following is an 85-amino-acid chain: Large ribosomal subunit protein bL27 (85 aa).

It belongs to the bacterial ribosomal protein bL27 family.

In Campylobacter hominis (strain ATCC BAA-381 / DSM 21671 / CCUG 45161 / LMG 19568 / NCTC 13146 / CH001A), this protein is Large ribosomal subunit protein bL27.